Here is a 400-residue protein sequence, read N- to C-terminus: MKNYHAPDEKGFFGEHGGLYVSETLIPALKELEQAYNEAKNDPEFWAEFRRDLKHYVGRPSPVYHAARLSEHLGGAQIWLKREDLNHTGAHKVNNTIGQALLARRMGKKRVIAETGAGQHGVASATVAARFGMTSDVYMGADDIQRQMPNVFRMKLLGANVIGVDSGSRTLKDAMNEAMREWVARVDDTFYIIGTAAGPAPYPEMVRDFQCVIGNEAKAQMQEATGRQPDVAVACVGGGSNAIGLFYPYIEEENVRLVGVEAGGLDVDTPDHAAPITSGAPIGVLHGFRSYLMQDENGQVLGTHSVSAGLDYPGIGPEHSHLHDIKRVEYTVAKDDEALEAFDLLCRFEGIIPALESSHVVGSGDKTRRKMGKDQVILVNLSGRGDKDINTVAKLKGIEL.

K92 carries the N6-(pyridoxal phosphate)lysine modification.

This sequence belongs to the TrpB family. In terms of assembly, tetramer of two alpha and two beta chains. Pyridoxal 5'-phosphate serves as cofactor.

The enzyme catalyses (1S,2R)-1-C-(indol-3-yl)glycerol 3-phosphate + L-serine = D-glyceraldehyde 3-phosphate + L-tryptophan + H2O. The protein operates within amino-acid biosynthesis; L-tryptophan biosynthesis; L-tryptophan from chorismate: step 5/5. Functionally, the beta subunit is responsible for the synthesis of L-tryptophan from indole and L-serine. This chain is Tryptophan synthase beta chain, found in Neisseria gonorrhoeae.